We begin with the raw amino-acid sequence, 445 residues long: Histamine H3 receptor (445 aa).

Topologically, residues 1–39 are extracellular; the sequence is MERAPPDGLMNASGTLAGEAAAAGGARGFSAAWTAVLAA. N-linked (GlcNAc...) asparagine glycosylation is present at N11. A helical transmembrane segment spans residues 40–60; the sequence is LMALLIVATVLGNALVMLAFV. Over 61–70 the chain is Cytoplasmic; that stretch reads ADSSLRTQNN. The helical transmembrane segment at 71-91 threads the bilayer; the sequence is FFLLNLAISDFLVGAFCIPLY. The Extracellular segment spans residues 92–108; it reads VPYVLTGRWTFGRGLCK. A disulfide bond links C107 and C188. The chain crosses the membrane as a helical span at residues 109–129; that stretch reads LWLVVDYLLCASSVFNIVLIS. Topologically, residues 130 to 156 are cytoplasmic; sequence YDRFLSVTRAVSYRAQQGDTRRAVRKM. Residues 157 to 177 form a helical membrane-spanning segment; it reads ALVWVLAFLLYGPAILSWEYL. Residues 178-196 lie on the Extracellular side of the membrane; that stretch reads SGGSSIPEGHCYAEFFYNW. The helical transmembrane segment at 197-217 threads the bilayer; it reads YFLITASTLEFFTPFLSVTFF. Residues 218 to 359 are Cytoplasmic-facing; it reads NLSIYLNIQR…LSRDKKVAKS (142 aa). 2 disordered regions span residues 234–259 and 286–336; these read DGGR…PSCW and AGEA…LEKR. The segment covering 241-256 has biased composition (pro residues); that stretch reads PEPPPDAQPSPPPAPP. Positions 290 to 299 are enriched in gly residues; the sequence is ALGGGSGGGA. Over residues 300–312 the composition is skewed to low complexity; sequence AASPTSSSGSSSR. The helical transmembrane segment at 360 to 380 threads the bilayer; sequence LAIIVSIFGLCWAPYTLLMII. At 381–396 the chain is on the extracellular side; that stretch reads RAACHGRCIPDYWYET. A helical membrane pass occupies residues 397-417; the sequence is SFWLLWANSAVNPVLYPLCHY. Residues 418-445 are Cytoplasmic-facing; the sequence is SFRRAFTKLLCPQKLKVQPHGSLEQCWK. S439 carries the phosphoserine modification.

It belongs to the G-protein coupled receptor 1 family. Expressed abundantly in brain, most notably throughout the thalamus, the ventromedial hypothalamus and the caudate nucleus. Isoform 1 is largely predominant in all tissues.

The protein localises to the cell membrane. Its function is as follows. The H3 subclass of histamine receptors could mediate the histamine signals in CNS and peripheral nervous system. Signals through the inhibition of adenylate cyclase and displays high constitutive activity (spontaneous activity in the absence of agonist). The protein is Histamine H3 receptor (Hrh3) of Rattus norvegicus (Rat).